Consider the following 226-residue polypeptide: tRNA (guanine-N(7)-)-methyltransferase (226 aa).

S-adenosyl-L-methionine contacts are provided by E59, E84, D111, and D134. D134 is an active-site residue. K138 provides a ligand contact to substrate. Residues 140-145 (RHNKRR) form an interaction with RNA region. Residues D170 and 205 to 208 (TKFE) each bind substrate.

The protein belongs to the class I-like SAM-binding methyltransferase superfamily. TrmB family.

It catalyses the reaction guanosine(46) in tRNA + S-adenosyl-L-methionine = N(7)-methylguanosine(46) in tRNA + S-adenosyl-L-homocysteine. It functions in the pathway tRNA modification; N(7)-methylguanine-tRNA biosynthesis. Functionally, catalyzes the formation of N(7)-methylguanine at position 46 (m7G46) in tRNA. In Chromobacterium violaceum (strain ATCC 12472 / DSM 30191 / JCM 1249 / CCUG 213 / NBRC 12614 / NCIMB 9131 / NCTC 9757 / MK), this protein is tRNA (guanine-N(7)-)-methyltransferase.